Consider the following 242-residue polypeptide: GDSL esterase/lipase At5g62930 (242 aa).

The Nucleophile role is filled by Ser-11. The segment at Pro-223 to Leu-242 is disordered.

Belongs to the 'GDSL' lipolytic enzyme family.

The protein is GDSL esterase/lipase At5g62930 of Arabidopsis thaliana (Mouse-ear cress).